The following is a 644-amino-acid chain: Core protein VP4 (644 aa).

This sequence belongs to the orbivirus VP4 family.

The protein resides in the virion. Functionally, the VP4 protein is one of the five proteins (with VP1, VP3, VP6 and VP7) which form the inner capsid of the virus. The sequence is that of Core protein VP4 (Segment-4) from Bluetongue virus 11 (isolate USA) (BTV 11).